The primary structure comprises 166 residues: MSSDVSPPPLLSAEAAAQLATAPPVFTTDQILEILPHRYPFLLVDRVVEYQPGQRAVGLKNVTFNEPFFQGHFPNRPIMPGVLIVEAMAQLGGIVLTKLPDVAGRLALFAGIDGVRFRRPVLPGDQLLLSANLLTIRQKRIGKMFCRAQVGGQLVTEGELMFSLVD.

Residue histidine 72 is part of the active site.

This sequence belongs to the thioester dehydratase family. FabZ subfamily.

It is found in the cytoplasm. It carries out the reaction a (3R)-hydroxyacyl-[ACP] = a (2E)-enoyl-[ACP] + H2O. In terms of biological role, involved in unsaturated fatty acids biosynthesis. Catalyzes the dehydration of short chain beta-hydroxyacyl-ACPs and long chain saturated and unsaturated beta-hydroxyacyl-ACPs. This is 3-hydroxyacyl-[acyl-carrier-protein] dehydratase FabZ from Synechococcus sp. (strain JA-3-3Ab) (Cyanobacteria bacterium Yellowstone A-Prime).